A 209-amino-acid chain; its full sequence is Imidazole glycerol phosphate synthase subunit HisH (209 aa).

A Glutamine amidotransferase type-1 domain is found at 5 to 209 (AIAIIDYDMG…LRNFVALVKD (205 aa)). C83 serves as the catalytic Nucleophile. Active-site residues include H188 and E190.

In terms of assembly, heterodimer of HisH and HisF.

It localises to the cytoplasm. The catalysed reaction is 5-[(5-phospho-1-deoxy-D-ribulos-1-ylimino)methylamino]-1-(5-phospho-beta-D-ribosyl)imidazole-4-carboxamide + L-glutamine = D-erythro-1-(imidazol-4-yl)glycerol 3-phosphate + 5-amino-1-(5-phospho-beta-D-ribosyl)imidazole-4-carboxamide + L-glutamate + H(+). It carries out the reaction L-glutamine + H2O = L-glutamate + NH4(+). It participates in amino-acid biosynthesis; L-histidine biosynthesis; L-histidine from 5-phospho-alpha-D-ribose 1-diphosphate: step 5/9. IGPS catalyzes the conversion of PRFAR and glutamine to IGP, AICAR and glutamate. The HisH subunit catalyzes the hydrolysis of glutamine to glutamate and ammonia as part of the synthesis of IGP and AICAR. The resulting ammonia molecule is channeled to the active site of HisF. The protein is Imidazole glycerol phosphate synthase subunit HisH of Thermosynechococcus vestitus (strain NIES-2133 / IAM M-273 / BP-1).